The following is a 611-amino-acid chain: Threonine--tRNA ligase (611 aa).

Residues 1-25 (MAGPDRKPVSSAAATTPAPSAPVVL) form a disordered region. Residues 9 to 24 (VSSAAATTPAPSAPVV) show a composition bias toward low complexity. Residues 209-502 (DHRRIGKDLD…MTENYAGDYP (294 aa)) form a catalytic region. Zn(2+) contacts are provided by Cys302, His353, and His479.

The protein belongs to the class-II aminoacyl-tRNA synthetase family. Homodimer. Requires Zn(2+) as cofactor.

It is found in the cytoplasm. The catalysed reaction is tRNA(Thr) + L-threonine + ATP = L-threonyl-tRNA(Thr) + AMP + diphosphate + H(+). Functionally, catalyzes the attachment of threonine to tRNA(Thr) in a two-step reaction: L-threonine is first activated by ATP to form Thr-AMP and then transferred to the acceptor end of tRNA(Thr). Also edits incorrectly charged L-seryl-tRNA(Thr). This Parasynechococcus marenigrum (strain WH8102) protein is Threonine--tRNA ligase.